The chain runs to 128 residues: Cytochrome c-type biogenesis protein CcmE (128 aa).

Residues 1–8 lie on the Cytoplasmic side of the membrane; sequence MQKRVRNR. Residues 9–29 form a helical; Signal-anchor for type II membrane protein membrane-spanning segment; the sequence is LITIIICFCSACLGISIILYN. The Extracellular segment spans residues 30 to 128; the sequence is LEKNIVFFLP…KHDENYRPPQ (99 aa). Residues H120 and Y124 each coordinate heme.

The protein belongs to the CcmE/CycJ family.

It localises to the cell membrane. Its function is as follows. Heme chaperone required for the biogenesis of c-type cytochromes. Transiently binds heme delivered by CcmC and transfers the heme to apo-cytochromes in a process facilitated by CcmF and CcmH. The sequence is that of Cytochrome c-type biogenesis protein CcmE from Rickettsia africae (strain ESF-5).